The following is a 188-amino-acid chain: Peptidyl-prolyl cis-trans isomerase (188 aa).

Positions Met1–Ala20 are cleaved as a signal peptide. In terms of domain architecture, PPIase cyclophilin-type spans Asn21 to Ile181.

It belongs to the cyclophilin-type PPIase family.

The protein resides in the periplasm. It catalyses the reaction [protein]-peptidylproline (omega=180) = [protein]-peptidylproline (omega=0). In terms of biological role, PPIases accelerate the folding of proteins. It catalyzes the cis-trans isomerization of proline imidic peptide bonds in oligopeptides. This protein is not essential for growth. Presumably plays a role in signal transduction. The chain is Peptidyl-prolyl cis-trans isomerase (rotA) from Acinetobacter baylyi (strain ATCC 33305 / BD413 / ADP1).